Consider the following 495-residue polypeptide: UPF0371 protein cgR_2887 (495 aa).

Belongs to the UPF0371 family.

The protein is UPF0371 protein cgR_2887 of Corynebacterium glutamicum (strain R).